The primary structure comprises 831 residues: Multiphosphoryl transfer protein (831 aa).

Residues 1-90 (MLTIQFLCPL…EYIQVRFIDS (90 aa)) form the HPr domain. The active-site Pros-phosphohistidine intermediate; for HPr activity is H15. H15 carries the post-translational modification Phosphohistidine; by EI. The segment at 119 to 650 (GNVLASGVGV…AVKSQLRQLD (532 aa)) is PTS EI. H298 (tele-phosphohistidine intermediate; for PTS EI activity) is an active-site residue. H298 is subject to Phosphohistidine; by autocatalysis. Phosphoenolpyruvate-binding residues include R405 and R441. Residues E540 and D564 each contribute to the Mg(2+) site. Phosphoenolpyruvate is bound by residues 563–564 (ND) and R574. C611 (proton donor; for EI activity) is an active-site residue. The PTS EIIA type-2 domain occupies 685–828 (PLLALENIFV…QSILTLLETE (144 aa)). H747 (tele-phosphohistidine intermediate; for PTS EIIA activity) is an active-site residue. At H747 the chain carries Phosphohistidine; by HPr.

This sequence belongs to the PEP-utilizing enzyme family. Mg(2+) serves as cofactor.

Its subcellular location is the cytoplasm. It carries out the reaction L-histidyl-[protein] + phosphoenolpyruvate = N(pros)-phospho-L-histidyl-[protein] + pyruvate. The catalysed reaction is D-fructose(out) + N(pros)-phospho-L-histidyl-[protein] = D-fructose 1-phosphate(in) + L-histidyl-[protein]. Its function is as follows. Multifunctional protein that includes general (non sugar-specific) and sugar-specific components of the phosphoenolpyruvate-dependent sugar phosphotransferase system (sugar PTS). This major carbohydrate active transport system catalyzes the phosphorylation of incoming sugar substrates concomitantly with their translocation across the cell membrane. The enzyme II FryABC PTS system is involved in fructose transport. The sequence is that of Multiphosphoryl transfer protein (fryA) from Escherichia coli O157:H7.